The sequence spans 1600 residues: A disintegrin and metalloproteinase with thrombospondin motifs 12 (1600 aa).

The signal sequence occupies residues 1–25 (MPCARGSWLAKLSIVAQLINFGAFC). A propeptide spanning residues 26–244 (HGRQTQPWPV…TLRSRSLSRR (219 aa)) is cleaved from the precursor. The N-linked (GlcNAc...) asparagine glycan is linked to Asn105. Positions 210 to 217 (PICGLKDS) match the Cysteine switch motif. Cys212 provides a ligand contact to Zn(2+). Residues 250–460 (RWVETLVVAD…GRGFCLDDIP (211 aa)) form the Peptidase M12B domain. Disulfide bonds link Cys326-Cys380, Cys355-Cys362, Cys374-Cys455, Cys413-Cys439, Cys482-Cys505, Cys493-Cys511, Cys500-Cys530, Cys524-Cys535, Cys558-Cys595, Cys562-Cys600, and Cys573-Cys585. His396 contacts Zn(2+). Glu397 is an active-site residue. Zn(2+)-binding residues include His400 and His406. A Disintegrin domain is found at 469 to 548 (VIAPGVIYDV…GKKPESIPGG (80 aa)). 4 TSP type-1 domains span residues 546–601 (PGGW…HPCR), 827–887 (KLLY…KDCP), 891–947 (WAGE…RDIL), and 948–1001 (CPSD…QQCP). Residues 705–831 (CQTVKKLFRQ…DNDVEKLLYF (127 aa)) form a spacer 1 region. Residues 1001 to 1321 (PFSRRVLKPN…HLMKDHSPAY (321 aa)) are spacer 2. Disordered regions lie at residues 1006-1140 (VLKP…LSSS) and 1158-1179 (PEVEIHSGSGEDSDQPLNKDKS). Over residues 1038 to 1047 (PTPLSTPTVP) the composition is skewed to low complexity. Positions 1048-1107 (ESMSTSTPTINSLGSTIASQEDANGMGWQNNSTQAEEGSHFPTSSGSTSQVPVTSWSLSI) are enriched in polar residues. Over residues 1130–1140 (TTTSDSGLSSS) the composition is skewed to low complexity. TSP type-1 domains are found at residues 1318 to 1371 (SPAY…RPCA), 1373 to 1428 (WRVG…CNLE), 1429 to 1477 (PCGE…NRHL), and 1478 to 1538 (CCHW…QACR). One can recognise a PLAC domain in the interval 1541 to 1581 (ADLTCLKDRLSISFCQTLKSMRKCSVPSVRAQCCLSCPQAP).

In terms of assembly, interacts with COMP. Requires Zn(2+) as cofactor. In terms of processing, the precursor is cleaved by a furin endopeptidase. Subjected to an intracellular maturation process yielding a 120 kDa N-terminal fragment containing the metalloproteinase, disintegrin, one TSP type-1 and the Cys-rich domains and a 83 kDa C-terminal fragment containing the spacer 2 and four TSP type-1 domains. Post-translationally, glycosylated. Can be O-fucosylated by POFUT2 on a serine or a threonine residue found within the consensus sequence C1-X(2)-(S/T)-C2-G of the TSP type-1 repeat domains where C1 and C2 are the first and second cysteine residue of the repeat, respectively. Fucosylated repeats can then be further glycosylated by the addition of a beta-1,3-glucose residue by the glucosyltransferase, B3GALTL. Fucosylation mediates the efficient secretion of ADAMTS family members. Can also be C-glycosylated with one or two mannose molecules on tryptophan residues within the consensus sequence W-X-X-W of the TPRs, and N-glycosylated. These other glycosylations can also facilitate secretion.

Its subcellular location is the secreted. It is found in the extracellular space. It localises to the extracellular matrix. With respect to regulation, inhibited by alpha-2 macroglobulin. In terms of biological role, metalloprotease that plays a role in the degradation of COMP. Also cleaves alpha-2 macroglobulin and aggregan. Has anti-tumorigenic properties. In Mus musculus (Mouse), this protein is A disintegrin and metalloproteinase with thrombospondin motifs 12 (Adamts12).